We begin with the raw amino-acid sequence, 200 residues long: Dephospho-CoA kinase (200 aa).

Residues 3 to 200 (VIGLTGGIGS…KKYMTLAQGS (198 aa)) enclose the DPCK domain. Residue 11–16 (GSGKTS) participates in ATP binding.

This sequence belongs to the CoaE family.

The protein resides in the cytoplasm. It carries out the reaction 3'-dephospho-CoA + ATP = ADP + CoA + H(+). Its pathway is cofactor biosynthesis; coenzyme A biosynthesis; CoA from (R)-pantothenate: step 5/5. In terms of biological role, catalyzes the phosphorylation of the 3'-hydroxyl group of dephosphocoenzyme A to form coenzyme A. The chain is Dephospho-CoA kinase from Nitrosospira multiformis (strain ATCC 25196 / NCIMB 11849 / C 71).